Here is a 287-residue protein sequence, read N- to C-terminus: CTD small phosphatase-like protein 3 (287 aa).

Residues 60–219 enclose the FCP1 homology domain; that stretch reads RSTPEYTLVL…LKLCSFLEAI (160 aa).

Belongs to the CTDSPL2 family.

Its function is as follows. Probable phosphatase. The polypeptide is CTD small phosphatase-like protein 3 (scpl-3) (Caenorhabditis elegans).